The following is a 340-amino-acid chain: Extracellular matrix protein-binding protein emp (340 aa).

The first 26 residues, 1–26 (MKKKLLVLTMSTLFATQLINSNHANA), serve as a signal peptide directing secretion.

Its subcellular location is the cell surface. Functionally, adhesin that binds to the host cell extracellular matrix proteins fibronectin, fibrinogen, collagen, and vitronectin. The sequence is that of Extracellular matrix protein-binding protein emp (emp) from Staphylococcus aureus.